The chain runs to 391 residues: Serpin B13 (391 aa).

It belongs to the serpin family. Ov-serpin subfamily. Skin specific.

The protein localises to the cytoplasm. May play a role in the proliferation or differentiation of keratinocytes. The sequence is that of Serpin B13 (SERPINB13) from Homo sapiens (Human).